The following is a 241-amino-acid chain: Pyridoxine 5'-phosphate synthase (241 aa).

Residue N7 participates in 3-amino-2-oxopropyl phosphate binding. 9 to 10 (DH) lines the 1-deoxy-D-xylulose 5-phosphate pocket. R18 provides a ligand contact to 3-amino-2-oxopropyl phosphate. Catalysis depends on H43, which acts as the Proton acceptor. 1-deoxy-D-xylulose 5-phosphate is bound by residues R45 and H50. E70 functions as the Proton acceptor in the catalytic mechanism. Residue T100 coordinates 1-deoxy-D-xylulose 5-phosphate. H190 serves as the catalytic Proton donor. 3-amino-2-oxopropyl phosphate is bound by residues G191 and 212-213 (GH).

Belongs to the PNP synthase family. In terms of assembly, homooctamer; tetramer of dimers.

The protein resides in the cytoplasm. The catalysed reaction is 3-amino-2-oxopropyl phosphate + 1-deoxy-D-xylulose 5-phosphate = pyridoxine 5'-phosphate + phosphate + 2 H2O + H(+). It participates in cofactor biosynthesis; pyridoxine 5'-phosphate biosynthesis; pyridoxine 5'-phosphate from D-erythrose 4-phosphate: step 5/5. Its function is as follows. Catalyzes the complicated ring closure reaction between the two acyclic compounds 1-deoxy-D-xylulose-5-phosphate (DXP) and 3-amino-2-oxopropyl phosphate (1-amino-acetone-3-phosphate or AAP) to form pyridoxine 5'-phosphate (PNP) and inorganic phosphate. In Bordetella avium (strain 197N), this protein is Pyridoxine 5'-phosphate synthase.